Consider the following 79-residue polypeptide: uncharacterized protein (79 aa).

This is an uncharacterized protein from Methanocaldococcus jannaschii (strain ATCC 43067 / DSM 2661 / JAL-1 / JCM 10045 / NBRC 100440) (Methanococcus jannaschii).